The chain runs to 69 residues: U2-agatoxin-Ao1i (69 aa).

An N-terminal signal peptide occupies residues 1-20; sequence MKAIISLLLISAMVFSMIEA. Residues 21-34 constitute a propeptide that is removed on maturation; the sequence is VPVXXGLQLFESER. Disulfide bonds link cysteine 36–cysteine 52, cysteine 43–cysteine 57, and cysteine 51–cysteine 67. The residue at position 68 (leucine 68) is a Leucine amide.

Belongs to the neurotoxin 01 (U2-agtx) family. In terms of tissue distribution, expressed by the venom gland.

It localises to the secreted. In terms of biological role, insect active toxin causing rapid but reversible paralysis in crickets. No activity shown in mammals. Does not show effect on mammalian voltage-gated calcium channels. The sequence is that of U2-agatoxin-Ao1i from Agelena orientalis (Funnel-web spider).